We begin with the raw amino-acid sequence, 255 residues long: Acetylglutamate kinase (255 aa).

Residues G40 to G41, R62, and N153 each bind substrate.

The protein belongs to the acetylglutamate kinase family. ArgB subfamily.

Its subcellular location is the cytoplasm. It carries out the reaction N-acetyl-L-glutamate + ATP = N-acetyl-L-glutamyl 5-phosphate + ADP. It functions in the pathway amino-acid biosynthesis; L-arginine biosynthesis; N(2)-acetyl-L-ornithine from L-glutamate: step 2/4. Catalyzes the ATP-dependent phosphorylation of N-acetyl-L-glutamate. This is Acetylglutamate kinase from Bacillus cereus (strain AH187).